Consider the following 359-residue polypeptide: tRNA/tmRNA (uracil-C(5))-methyltransferase (359 aa).

5 residues coordinate S-adenosyl-L-methionine: Gln183, Tyr211, Asn216, Glu232, and Asp292. The Nucleophile role is filled by Cys317. Residue Glu351 is the Proton acceptor of the active site.

This sequence belongs to the class I-like SAM-binding methyltransferase superfamily. RNA M5U methyltransferase family. TrmA subfamily.

It catalyses the reaction uridine(54) in tRNA + S-adenosyl-L-methionine = 5-methyluridine(54) in tRNA + S-adenosyl-L-homocysteine + H(+). The enzyme catalyses uridine(341) in tmRNA + S-adenosyl-L-methionine = 5-methyluridine(341) in tmRNA + S-adenosyl-L-homocysteine + H(+). Its function is as follows. Dual-specificity methyltransferase that catalyzes the formation of 5-methyluridine at position 54 (m5U54) in all tRNAs, and that of position 341 (m5U341) in tmRNA (transfer-mRNA). In Pseudomonas fluorescens (strain SBW25), this protein is tRNA/tmRNA (uracil-C(5))-methyltransferase.